The sequence spans 289 residues: Probable endonuclease 4 (289 aa).

Residues His-75, His-115, Glu-153, Asp-187, His-190, His-224, Asp-237, His-239, and Glu-269 each contribute to the Zn(2+) site.

Belongs to the AP endonuclease 2 family. The cofactor is Zn(2+).

It catalyses the reaction Endonucleolytic cleavage to 5'-phosphooligonucleotide end-products.. Its function is as follows. Endonuclease IV plays a role in DNA repair. It cleaves phosphodiester bonds at apurinic or apyrimidinic (AP) sites, generating a 3'-hydroxyl group and a 5'-terminal sugar phosphate. In Chlamydia caviae (strain ATCC VR-813 / DSM 19441 / 03DC25 / GPIC) (Chlamydophila caviae), this protein is Probable endonuclease 4.